Consider the following 126-residue polypeptide: Fluoride-specific ion channel FluC (126 aa).

4 consecutive transmembrane segments (helical) span residues 4 to 24 (PLLS…FLGL), 33 to 53 (IPLG…FAMA), 67 to 87 (FVIT…IEIV), and 97 to 117 (MAML…CLGL). Glycine 74 and threonine 77 together coordinate Na(+).

The protein belongs to the fluoride channel Fluc/FEX (TC 1.A.43) family.

The protein resides in the cell inner membrane. It carries out the reaction fluoride(in) = fluoride(out). Na(+) is not transported, but it plays an essential structural role and its presence is essential for fluoride channel function. In terms of biological role, fluoride-specific ion channel. Important for reducing fluoride concentration in the cell, thus reducing its toxicity. The chain is Fluoride-specific ion channel FluC from Acinetobacter baumannii (strain ATCC 17978 / DSM 105126 / CIP 53.77 / LMG 1025 / NCDC KC755 / 5377).